The primary structure comprises 73 residues: Photosystem I reaction center subunit IV (73 aa).

It belongs to the PsaE family.

Its subcellular location is the cellular thylakoid membrane. Its function is as follows. Stabilizes the interaction between PsaC and the PSI core, assists the docking of the ferredoxin to PSI and interacts with ferredoxin-NADP oxidoreductase. In Synechococcus sp. (strain JA-3-3Ab) (Cyanobacteria bacterium Yellowstone A-Prime), this protein is Photosystem I reaction center subunit IV.